A 455-amino-acid chain; its full sequence is Anaerobic glycerol-3-phosphate dehydrogenase subunit B (455 aa).

This sequence belongs to the anaerobic G-3-P dehydrogenase subunit B family. In terms of assembly, composed of a catalytic GlpA/B dimer and of membrane bound GlpC. The cofactor is FMN.

It carries out the reaction a quinone + sn-glycerol 3-phosphate = dihydroxyacetone phosphate + a quinol. Its pathway is polyol metabolism; glycerol degradation via glycerol kinase pathway; glycerone phosphate from sn-glycerol 3-phosphate (anaerobic route): step 1/1. Functionally, conversion of glycerol 3-phosphate to dihydroxyacetone. Uses fumarate or nitrate as electron acceptor. The chain is Anaerobic glycerol-3-phosphate dehydrogenase subunit B from Aliivibrio fischeri (strain MJ11) (Vibrio fischeri).